Consider the following 195-residue polypeptide: Imidazoleglycerol-phosphate dehydratase (195 aa).

This sequence belongs to the imidazoleglycerol-phosphate dehydratase family.

The protein resides in the cytoplasm. It carries out the reaction D-erythro-1-(imidazol-4-yl)glycerol 3-phosphate = 3-(imidazol-4-yl)-2-oxopropyl phosphate + H2O. It participates in amino-acid biosynthesis; L-histidine biosynthesis; L-histidine from 5-phospho-alpha-D-ribose 1-diphosphate: step 6/9. The polypeptide is Imidazoleglycerol-phosphate dehydratase (Paracoccus denitrificans (strain Pd 1222)).